Here is a 359-residue protein sequence, read N- to C-terminus: Uroporphyrinogen decarboxylase (359 aa).

Residues 36-40 (RQAGR), Asp85, Tyr160, Ser215, and His338 contribute to the substrate site.

It belongs to the uroporphyrinogen decarboxylase family. Homodimer.

The protein localises to the cytoplasm. It carries out the reaction uroporphyrinogen III + 4 H(+) = coproporphyrinogen III + 4 CO2. Its pathway is porphyrin-containing compound metabolism; protoporphyrin-IX biosynthesis; coproporphyrinogen-III from 5-aminolevulinate: step 4/4. Functionally, catalyzes the decarboxylation of four acetate groups of uroporphyrinogen-III to yield coproporphyrinogen-III. This Corynebacterium efficiens (strain DSM 44549 / YS-314 / AJ 12310 / JCM 11189 / NBRC 100395) protein is Uroporphyrinogen decarboxylase.